Reading from the N-terminus, the 501-residue chain is Eukaryotic translation initiation factor 3 subunit E (501 aa).

A PCI domain is found at 245–423 (CDLFFYTPYL…ESIESTSTNV (179 aa)). Phosphoserine occurs at positions 477 and 479.

The protein belongs to the eIF-3 subunit E family. As to quaternary structure, component of the eukaryotic translation initiation factor 3 (eIF-3) complex. The eIF-3 complex appears to include tif32/eif3a, SPAC25G10.08/eif3b, tif33/eif3c, SPBC4C3.07/eif3f, tif35/eif3g and sum1/eif3i. This set of common subunits may also associate exclusively with either moe1/eif3d and int6/eif3e, or with SPAC821.05/eif3h and SPAC1751.03/eif3m. The eIF-3 complex may also include SPAC3A12.13c/eif3j. Also interacts with the proteasome via rpn501/rpn502.

The protein localises to the cytoplasm. Its function is as follows. Component of the eukaryotic translation initiation factor 3 (eIF-3) complex, which is involved in protein synthesis of a specialized repertoire of mRNAs and, together with other initiation factors, stimulates binding of mRNA and methionyl-tRNAi to the 40S ribosome. The eIF-3 complex specifically targets and initiates translation of a subset of mRNAs involved in cell proliferation (Potential). Required for maintaining the basal level of atf1 and for transcriptional activation of core environmental stress response genes (CESR genes) in response to histidine starvation. May positively regulate proteasome activity. Required for nuclear localization of the proteasome subunit rpn501/rpn502. The polypeptide is Eukaryotic translation initiation factor 3 subunit E (int6) (Schizosaccharomyces pombe (strain 972 / ATCC 24843) (Fission yeast)).